The primary structure comprises 3063 residues: MRSRLPPALAALGAALLLSSIEAEVDPPSDLNFKIIDENTVHMSWAKPVDPIVGYRITVDPTTDGPTKEFTLSASTTETLLSELVPETEYVVTITSYDEVEESVPVIGQLTIQTGSSTKPVEKKPGKTEIQKCSVSAWTDLVFLVDGSWSVGRNNFKYILDFIAALVSAFDIGEEKTRVGVVQYSSDTRTEFNLNQYYQRDELLAAIKKIPYKGGNTMTGDAIDYLVKNTFTESAGARVGFPKVAIIITDGKSQDEVEIPARELRNVGVEVFSLGIKAADAKELKQIASTPSLNHVFNVANFDAIVDIQNEIISQVCSGVDEQLGELVSGEEVVEPPSNLIAMEVSSKYVKLNWNPSPSPVTGYKVILTPMTAGSRQHALSVGPQTTTLSVRDLSADTEYQISVSAMKGMTSSEPISIMEKTQPMKVQVECSRGVDIKADIVFLVDGSYSIGIANFVKVRAFLEVLVKSFEISPNRVQISLVQYSRDPHTEFTLKKFTKVEDIIEAINTFPYRGGSTNTGKAMTYVREKIFVPSKGSRSNVPKVMILITDGKSSDAFRDPAIKLRNSDVEIFAVGVKDAVRSELEAIASPPAETHVFTVEDFDAFQRISFELTQSICLRIEQELAAIKKKAYVPPKDLSFSEVTSYGFKTNWSPAGENVFSYHITYKEAAGDDEVTVVEPASSTSVVLSSLKPETLYLVNVTAEYEDGFSIPLAGEETTEEVKGAPRNLKVTDETTDSFKITWTQAPGRVLRYRIIYRPVAGGESREVTTPPNQRRRTLENLIPDTKYEVSVIPEYFSGPGTPLTGNAATEEVRGNPRDLRVSDPTTSTMKLSWSGAPGKVKQYLVTYTPVAGGETQEVTVRGDTTNTVLQGLKEGTQYALSVTALYASGAGDALFGEGTTLEERGSPQDLVTKDITDTSIGAYWTSAPGMVRGYRVSWKSLYDDVDTGEKNLPEDAIHTMIENLQPETKYRISVFATYSSGEGEPLTGDATTELSQDSKTLKVDEETENTMRVTWKPAPGKVVNYRVVYRPHGRGKQMVAKVPPTVTSTVLKRLQPQTTYDITVLPIYKMGEGKLRQGSGTTASRFKSPRNLKTSDPTMSSFRVTWEPAPGEVKGYKVTFHPTGDDRRLGELVVGPYDNTVVLEELRAGTTYKVNVFGMFDGGESSPLVGQEMTTLSDTTVMPILSSGMECLTRAEADIVLLVDGSWSIGRANFRTVRSFISRIVEVFDIGPKRVQIALAQYSGDPRTEWQLNAHRDKKSLLQAVANLPYKGGNTLTGMALNFIRQQNFRTQAGMRPRARKIGVLITDGKSQDDVEAPSKKLKDEGVELFAIGIKNADEVELKMIATDPDDTHAYNVADFESLSRIVDDLTINLCNSVKGPGDLEAPSNLVISERTHRSFRVSWTPPSDSVDRYKVEYYPVSGGKRQEFYVSRMETSTVLKDLKPETEYVVNVYSVVEDEYSEPLKGTEKTLPVPVVSLNIYDVGPTTMHVQWQPVGGATGYILSYKPVKDTEPTRPKEVRLGPTVNDMQLTDLVPNTEYAVTVQAVLHDLTSEPVTVREVTLPLPRPQDLKLRDVTHSTMNVFWEPVPGKVRKYIVRYKTPEEDVKEVEVDRSETSTSLKDLFSQTLYTVSVSAVHDEGESPPVTAQETTRPVPAPTNLKITEVTSEGFRGTWDHGASDVSLYRITWAPFGSSDKMETILNGDENTLVFENLNPNTIYEVSITAIYPDESESDDLIGSERTLPILTTQAPKSGPRNLQVYNATSNSLTVKWDPASGRVQKYRITYQPSTGEGNEQTTTIGGRQNSVVLQKLKPDTPYTITVSSLYPDGEGGRMTGRGKTKPLNTVRNLRVYDPSTSTLNVRWDHAEGNPRQYKLFYAPAAGGPEELVPIPGNTNYAILRNLQPDTSYTVTVVPVYTEGDGGRTSDTGRTLMRGLARNVQVYNPTPNSLDVRWDPAPGPVLQYRVVYSPVDGTRPSESIVVPGNTRMVHLERLIPDTLYSVNLVALYSDGEGNPSPAQGRTLPRSGPRNLRVFGETTNSLSVAWDHADGPVQQYRIIYSPTVGDPIDEYTTVPGRRNNVILQPLQPDTPYKITVIAVYEDGDGGHLTGNGRTVGLLPPQNIHISDEWYTRFRVSWDPSPSPVLGYKIVYKPVGSNEPMEAFVGEMTSYTLHNLNPSTTYDVNVYAQYDSGLSVPLTDQGTTLYLNVTDLKTYQIGWDTFCVKWSPHRAATSYRLKLSPADGTRGQEITVRGSETSHCFTGLSPDTDYGVTVFVQTPNLEGPGVSVKEHTTVKPTEAPTEPPTPPPPPTIPPARDVCKGAKADIVFLTDASWSIGDDNFNKVVKFIFNTVGGFDEISPAGIQVSFVQYSDEVKSEFKLNTYNDKALALGALQNIRYRGGNTRTGKALTFIKEKVLTWESGMRKNVPKVLVVVTDGRSQDEVKKAALVIQQSGFSVFVVGVADVDYNELANIASKPSERHVFIVDDFESFEKIEDNLITFVCETATSSCPLIYLDGYTSPGFKMLEAYNLTEKNFASVQGVSLESGSFPSYSAYRIQKNAFVNQPTADLHPNGLPPSYTIILLFRLLPETPSDPFAIWQITDRDYKPQVGVIADPSSKTLSFFNKDTRGEVQTVTFDTEEVKTLFYGSFHKVHIVVTSKSVKIYIDCYEIIEKDIKEAGNITTDGYEILGKLLKGERKSAAFQIQSFDIVCSPVWTSRDRCCDIPSRRDEGKCPAFPNSCTCTQDSVGPPGPPGPAGGPGAKGPRGERGISGAIGPPGPRGDIGPPGPQGPPGPQGPNGLSIPGEQGRQGMKGDAGEPGLPGRTGTPGLPGPPGPMGPPGDRGFTGKDGAMGPRGPPGPPGSPGSPGVTGPSGKPGKPGDHGRPGPSGLKGEKGDRGDIASQNMMRAVARQVCEQLISGQMNRFNQMLNQIPNDYQSSRNQPGPPGPPGPPGSAGARGEPGPGGRPGFPGTPGMQGPPGERGLPGEKGERGTGSSGPRGLPGPPGPQGESRTGPPGSTGSRGPPGPPGRPGNSGIRGPPGPPGYCDSSQCASIPYNGQGYPGSG.

A signal peptide spans 1-23; it reads MRSRLPPALAALGAALLLSSIEA. The region spanning 27 to 117 is the Fibronectin type-III 1 domain; it reads PPSDLNFKII…GQLTIQTGSS (91 aa). Positions 140-316 constitute a VWFA 1 domain; it reads DLVFLVDGSW…DIQNEIISQV (177 aa). Ser-329 carries O-linked (Xyl...) (chondroitin sulfate) serine glycosylation. Positions 336–426 constitute a Fibronectin type-III 2 domain; sequence PPSNLIAMEV…SIMEKTQPMK (91 aa). The VWFA 2 domain maps to 440-616; it reads DIVFLVDGSY…RISFELTQSI (177 aa). 6 Fibronectin type-III domains span residues 634 to 722, 725 to 816, 817 to 905, 907 to 998, 999 to 1087, and 1089 to 1179; these read PPKD…TEEV, APRN…VRGN, PRDL…LEER, SPQD…LSQD, SKTL…ASRF, and SPRN…TLSD. N-linked (GlcNAc...) asparagine glycosylation is present at Asn-700. O-linked (Xyl...) (chondroitin sulfate) serine glycosylation occurs at Ser-798. A disordered region spans residues 799 to 830; that stretch reads GPGTPLTGNAATEEVRGNPRDLRVSDPTTSTM. A compositionally biased stretch (basic and acidic residues) spans 811 to 822; the sequence is EEVRGNPRDLRV. The Cell attachment site motif lies at 862 to 864; that stretch reads RGD. 2 O-linked (Xyl...) (chondroitin sulfate) serine glycosylation sites follow: Ser-889 and Ser-981. The tract at residues 1077–1099 is disordered; it reads RQGSGTTASRFKSPRNLKTSDPT. Over residues 1079–1099 the composition is skewed to polar residues; it reads GSGTTASRFKSPRNLKTSDPT. Residues 1199-1371 enclose the VWFA 3 domain; that stretch reads DIVLLVDGSW…ESLSRIVDDL (173 aa). 10 consecutive Fibronectin type-III domains span residues 1387–1476, 1477–1567, 1568–1658, 1659–1754, 1755–1849, 1850–1935, 1936–2026, 2027–2117, 2118–2206, and 2207–2294; these read APSN…LPVP, VVSL…LPLP, RPQD…VPAP, TNLK…APKS, GPRN…TVRN, LRVY…LMRG, LARN…LPRS, GPRN…VGLL, PPQN…LYLN, and VTDL…TVKP. Asn-1763 carries N-linked (GlcNAc...) asparagine glycosylation. An N-linked (GlcNAc...) asparagine glycan is attached at Asn-2206. The segment at 2283–2312 is disordered; the sequence is GVSVKEHTTVKPTEAPTEPPTPPPPPTIPP. Positions 2299–2311 are enriched in pro residues; it reads TEPPTPPPPPTIP. The VWFA 4 domain occupies 2323-2496; the sequence is DIVFLTDASW…ESFEKIEDNL (174 aa). Residues 2451–2746 form a nonhelical region (NC3) region; that stretch reads SGFSVFVVGV…NSCTCTQDSV (296 aa). The 193-residue stretch at 2520–2712 folds into the Laminin G-like domain; that stretch reads GFKMLEAYNL…IQSFDIVCSP (193 aa). N-linked (GlcNAc...) asparagine glycosylation is found at Asn-2528 and Asn-2679. Disordered regions lie at residues 2743 to 2896 and 2932 to 3063; these read QDSV…GDRG and NDYQ…PGSG. Collagen-like domains lie at 2747–2798, 2802–2852, 2853–2898, and 2941–2990; these read GPPG…GPNG, PGEQ…AMGP, RGPP…RGDI, and PGPP…GERG. The tract at residues 2747-2898 is triple-helical region (COL2) with 1 imperfection; sequence GPPGPPGPAG…KGEKGDRGDI (152 aa). A Cell attachment site motif is present at residues 2779–2781; the sequence is RGD. Over residues 2784 to 2794 the composition is skewed to pro residues; the sequence is PPGPQGPPGPQ. Low complexity predominate over residues 2817–2826; sequence PGLPGRTGTP. Composition is skewed to pro residues over residues 2828–2837 and 2853–2862; these read LPGPPGPMGP and RGPPGPPGSP. The span at 2864–2874 shows a compositional bias: low complexity; the sequence is SPGVTGPSGKP. The Cell attachment site motif lies at 2895-2897; that stretch reads RGD. Positions 2899–2941 are nonhelical region (NC2); that stretch reads ASQNMMRAVARQVCEQLISGQMNRFNQMLNQIPNDYQSSRNQP. The segment covering 2941-2950 has biased composition (pro residues); sequence PGPPGPPGPP. Residues 2942–3044 are triple-helical region (COL1) with 2 imperfections; it reads GPPGPPGPPG…RGPPGPPGYC (103 aa). A 4-hydroxyproline mark is found at Pro-2944, Pro-2947, Pro-2950, Pro-2959, Pro-2965, Pro-2968, Pro-2971, Pro-2983, Pro-3000, Pro-3003, Pro-3014, Pro-3023, Pro-3026, and Pro-3029. Over residues 2957-2966 the composition is skewed to gly residues; it reads GEPGPGGRPG. Residues 3006-3020 show a composition bias toward low complexity; sequence QGESRTGPPGSTGSR. A nonhelical region (NC1) region spans residues 3045-3063; sequence DSSQCASIPYNGQGYPGSG.

The protein belongs to the fibril-associated collagens with interrupted helices (FACIT) family. As to quaternary structure, trimer of identical chains each containing 190 kDa of non-triple-helical sequences. Post-translationally, the triple-helical tail is stabilized by disulfide bonds at each end. In terms of processing, hydroxylation on proline residues within the sequence motif, GXPG, is most likely to be 4-hydroxy as this fits the requirement for 4-hydroxylation in vertebrates. Isoform 1 O-glycosylation; glycosaminoglycan of chondroitin-sulfate type. As to expression, found in collagen I-containing tissues: both isoform 1 and isoform 2 appear in amnion, chorion, skeletal muscle, small intestine, and in cell culture of dermal fibroblasts, keratinocytes and endothelial cells. Only isoform 2 is found in lung, placenta, kidney and a squamous cell carcinoma cell line. Isoform 1 is also present in the corneal epithelial Bowman's membrane (BM) and the interfibrillar matrix of the corneal stroma, but it is not detected in the limbal BM.

It is found in the secreted. Its subcellular location is the extracellular space. The protein localises to the extracellular matrix. Type XII collagen interacts with type I collagen-containing fibrils, the COL1 domain could be associated with the surface of the fibrils, and the COL2 and NC3 domains may be localized in the perifibrillar matrix. The chain is Collagen alpha-1(XII) chain (COL12A1) from Homo sapiens (Human).